The sequence spans 423 residues: Endochitinase 1 (423 aa).

An N-terminal signal peptide occupies residues 1-22 (MPSLFAQSLAIIATLQATLGLA). The GH18 domain occupies 39-401 (YVNAVYFTNW…GTSSNKLGGP (363 aa)). Residues Asn-74, Asn-78, and Asn-96 are each glycosylated (N-linked (GlcNAc...) asparagine). Residues 103-104 (GT) and 130-133 (GGWT) contribute to the chitin site. Residue Glu-172 is the Proton donor of the active site. Chitin-binding positions include Tyr-173 and 238–241 (MAYD). Asn-248 carries an N-linked (GlcNAc...) asparagine glycan. Trp-378 provides a ligand contact to chitin. The interval 380-423 (ASSDRSGSQSLIGTSSNKLGGPDSTENLLNYPDSKYDNMRKQMA) is disordered. Positions 383–407 (DRSGSQSLIGTSSNKLGGPDSTENL) are enriched in polar residues. Positions 413–423 (SKYDNMRKQMA) are enriched in basic and acidic residues.

It belongs to the glycosyl hydrolase 18 family. Chitinase class V subfamily.

The protein resides in the secreted. It carries out the reaction Random endo-hydrolysis of N-acetyl-beta-D-glucosaminide (1-&gt;4)-beta-linkages in chitin and chitodextrins.. Secreted chitinase involved in the degradation of chitin, a component of the cell walls of fungi and exoskeletal elements of some animals (including worms and arthropods). Participates in the infection process and directly acts in the penetration process of the host cuticle. The polypeptide is Endochitinase 1 (chit1) (Metarhizium anisopliae (Entomophthora anisopliae)).